The following is a 347-amino-acid chain: D-alanine--D-alanine ligase (347 aa).

Residues 131–333 form the ATP-grasp domain; it reads KRVLESAGIA…YPELIERLVD (203 aa). An ATP-binding site is contributed by 161–216; that stretch reads EEKLAYPVFTKPSNMGSSVGISKSENQEELRQALKLAFRYDSRVLVEQGVNAREIE. Asp287, Glu300, and Asn302 together coordinate Mg(2+).

The protein belongs to the D-alanine--D-alanine ligase family. Mg(2+) serves as cofactor. Mn(2+) is required as a cofactor.

It is found in the cytoplasm. The enzyme catalyses 2 D-alanine + ATP = D-alanyl-D-alanine + ADP + phosphate + H(+). Its pathway is cell wall biogenesis; peptidoglycan biosynthesis. Its function is as follows. Cell wall formation. The protein is D-alanine--D-alanine ligase of Streptococcus pneumoniae (strain JJA).